A 475-amino-acid chain; its full sequence is Sulfate adenylyltransferase subunit 1 (475 aa).

Residues 25 to 239 enclose the tr-type G domain; the sequence is KSLLRFLTCG…EVLETVEIQR (215 aa). The G1 stretch occupies residues 34 to 41; the sequence is GSVDDGKS. GTP is bound at residue 34–41; sequence GSVDDGKS. The segment at 92–96 is G2; it reads GITID. Residues 113 to 116 are G3; it reads DTPG. GTP contacts are provided by residues 113–117 and 168–171; these read DTPGH and NKMD. Positions 168 to 171 are G4; it reads NKMD. The interval 206–208 is G5; sequence SAL.

This sequence belongs to the TRAFAC class translation factor GTPase superfamily. Classic translation factor GTPase family. CysN/NodQ subfamily. Heterodimer composed of CysD, the smaller subunit, and CysN.

It catalyses the reaction sulfate + ATP + H(+) = adenosine 5'-phosphosulfate + diphosphate. It functions in the pathway sulfur metabolism; hydrogen sulfide biosynthesis; sulfite from sulfate: step 1/3. In terms of biological role, with CysD forms the ATP sulfurylase (ATPS) that catalyzes the adenylation of sulfate producing adenosine 5'-phosphosulfate (APS) and diphosphate, the first enzymatic step in sulfur assimilation pathway. APS synthesis involves the formation of a high-energy phosphoric-sulfuric acid anhydride bond driven by GTP hydrolysis by CysN coupled to ATP hydrolysis by CysD. This is Sulfate adenylyltransferase subunit 1 from Escherichia coli (strain UTI89 / UPEC).